A 205-amino-acid chain; its full sequence is RNA pyrophosphohydrolase (205 aa).

Residues 6–149 (GFRPNVGIVL…KRGVYARALR (144 aa)) enclose the Nudix hydrolase domain. A Nudix box motif is present at residues 38–59 (GGMNTDETPVEAMYRELREETG). Residues 178 to 205 (GSSAAGHDSPRKRPRKRNGARAMRINND) form a disordered region. Basic residues predominate over residues 187-196 (PRKRPRKRNG).

It belongs to the Nudix hydrolase family. RppH subfamily. Requires a divalent metal cation as cofactor.

Its function is as follows. Accelerates the degradation of transcripts by removing pyrophosphate from the 5'-end of triphosphorylated RNA, leading to a more labile monophosphorylated state that can stimulate subsequent ribonuclease cleavage. This is RNA pyrophosphohydrolase from Xanthomonas axonopodis pv. citri (strain 306).